The primary structure comprises 587 residues: Complement component C8 beta chain (587 aa).

Positions 1 to 31 (MNHKLKPTVGLGYCLLCAALCLLLLRDVAIA) are cleaved as a signal peptide. The propeptide occupies 32 to 44 (GSGEEPSGVREAR). Residues 56-111 (DCVQSEWSSWTRCDVCRKKRYRYAKLVQPSQFGGEPCHVQGKEVEPCSPPSRYDCT) form the TSP type-1 1 domain. Disulfide bonds link C57–C92, C68–C102, C71–C110, C118–C129, and C123–C142. Residues W62 and W65 are each glycosylated (C-linked (Man) tryptophan). An LDL-receptor class A domain is found at 117–159 (LCEGFLCTYTGRCVPIDLRCNGDDDCGDWSAEKGSPKVPKACK). Positions 134, 137, 139, 141, and 148 each coordinate Ca(2+). One can recognise an MACPF domain in the interval 154–500 (VPKACKQEAQ…EYLEESSSCR (347 aa)). A disulfide bridge links C158 with C196. The next 4 beta stranded transmembrane spans lie at 248–255 (TTVSIGFA), 258–265 (GVAEFGFN), 375–382 (EQIVLKVG), and 388–395 (VYVTVGLE). Cystine bridges form between C374–C399, C499–C546, C501–C517, C504–C519, and C521–C530. One can recognise an EGF-like domain in the interval 501–531 (CAPCRNNGLAVLKGTRCECVCPSGYSGLGCE). The TSP type-1 2 domain occupies 541–587 (DGSWSCWGSWSPCRGRSKTRSRQCNNPAPSSGGIACRGLQMETTDCF). Residues W547 and W550 are each glycosylated (C-linked (Man) tryptophan). Residues C553 and C586 are joined by a disulfide bond.

Belongs to the complement C6/C7/C8/C9 family. As to quaternary structure, heterotrimer of 3 chains: alpha (C8A), beta (C8B) and gamma (C8G); the alpha and gamma chains are disulfide bonded. Component of the membrane attack complex (MAC), composed of complement C5b, C6, C7, C8A, C8B, C8G and multiple copies of the pore-forming subunit C9.

The protein localises to the secreted. Its subcellular location is the target cell membrane. In terms of biological role, component of the membrane attack complex (MAC), a multiprotein complex activated by the complement cascade, which inserts into a target cell membrane and forms a pore, leading to target cell membrane rupture and cell lysis. The MAC is initiated by proteolytic cleavage of C5 into complement C5b in response to the classical, alternative, lectin and GZMK complement pathways. The complement pathways consist in a cascade of proteins that leads to phagocytosis and breakdown of pathogens and signaling that strengthens the adaptive immune system. C8B, together with C8A and C8G, inserts into the target membrane, but does not form pores by itself. During MAC assembly, associates with C5b, C6 and C7 to form the C5b8 intermediate complex that inserts into the target membrane and traverses the bilayer increasing membrane rigidity. The sequence is that of Complement component C8 beta chain (c8b) from Oncorhynchus mykiss (Rainbow trout).